Here is a 114-residue protein sequence, read N- to C-terminus: Macrophage migration inhibitory factor homolog (114 aa).

The active-site Proton acceptor; via imino nitrogen is P2. 2 residues coordinate substrate: K33 and I65.

This sequence belongs to the MIF family.

The protein localises to the secreted. The enzyme catalyses L-dopachrome = 5,6-dihydroxyindole-2-carboxylate. It catalyses the reaction 3-phenylpyruvate = enol-phenylpyruvate. Functionally, tautomerization of the methyl ester of L-dopachrome. Inhibits migration of human peripheral blood mononuclear cells. This Trichinella spiralis (Trichina worm) protein is Macrophage migration inhibitory factor homolog.